The primary structure comprises 632 residues: MSAESHPTESQMTPKKLFYLTLGSIGVVYGDIGTSPLYAFREALKPVAHDGLTRFEVISLISLMIWALTIIVTIKYVLFLLRADNEGEGGTLSLLALLMKTANGHTAILMLLGLLGAALFLGDAMITPALSVLSAVEGLKLVTPRLSEYIVPISVVILALLFVVQSRGTGAVAKFFGPITAVWFLVMAAAGISHISDDFGILAAFNPYYAVSFLLHEGFYGVVVLGAVFLTVTGAEALYADLGHFGRRPIQWAWFLLVFPSLTLNYLGQGALVLGKPETMSDPFYLMYPQWALLPVVILATAATIIASQAVITGAFSMVRQGINLGFLPRREILFTSETNTGQIFVPSVNAVLFIGVIFLVLSFKTSDALATAYGISVTGAMVVTSIMAFEFVRARWNWSLPVAVIALAPLVILELIFLGANLLKIHDGGYIPILIATAFTVIMWTWRRGTAILMEKTRHTDIPLASFVSSIERKSEHSPAQVPGTAIFLTSDPESAPAALLHNLKHNHVLHDRNVILTIRTVNKPRVPSQDRYKVEQISERFSRVELLFGFMESQNVSQALATLRKAGLKFDIMSTSFYLGRRKLVPDANSGMPYWQDRFYILLANAASLPSDYFHLPANRVVELGSQIIV.

12 helical membrane-spanning segments follow: residues 17 to 37 (LFYL…TSPL), 60 to 80 (LISL…VLFL), 106 to 126 (TAIL…DAMI), 146 to 166 (LSEY…VVQS), 175 to 195 (FFGP…ISHI), 210 to 230 (AVSF…AVFL), 254 to 274 (WFLL…ALVL), 292 to 312 (ALLP…QAVI), 344 to 364 (IFVP…VLSF), 370 to 390 (LATA…IMAF), 401 to 421 (LPVA…FLGA), and 426 to 446 (IHDG…IMWT).

Belongs to the HAK/KUP transporter (TC 2.A.72) family.

It is found in the cell inner membrane. The enzyme catalyses K(+)(in) + H(+)(in) = K(+)(out) + H(+)(out). In terms of biological role, transport of potassium into the cell. Likely operates as a K(+):H(+) symporter. This is Probable potassium transport system protein Kup from Rhizobium rhizogenes (Agrobacterium rhizogenes).